A 65-amino-acid chain; its full sequence is Hainantoxin-X (65 aa).

Residues 1–20 (MNMKILVLVAVLCLVVSTHA) form the signal peptide. Positions 21–37 (ERHSKTDMEDSPMIQER) are excised as a propeptide. Disulfide bonds link cysteine 39-cysteine 56, cysteine 46-cysteine 59, and cysteine 55-cysteine 64.

This sequence belongs to the neurotoxin 36 family. 02 subfamily. As to expression, expressed by the venom gland.

It is found in the secreted. In terms of biological role, reversibly blocks N-type calcium channels (Cav2.2/CACNA1B) in rat dorsal root ganglion cells. Elicits no toxic symptoms in either vertebrates or invertebrates during a period of 48 hours post-injection, when it was assayed in vivo by direct injection into mice and cockroaches. The chain is Hainantoxin-X from Cyriopagopus hainanus (Chinese bird spider).